Consider the following 219-residue polypeptide: uncharacterized protein (219 aa).

Belongs to the CIA30 family.

The protein localises to the cytoplasm. The protein resides in the nucleus. This is an uncharacterized protein from Schizosaccharomyces pombe (strain 972 / ATCC 24843) (Fission yeast).